The sequence spans 111 residues: Large ribosomal subunit protein uL24 (111 aa).

This sequence belongs to the universal ribosomal protein uL24 family. Part of the 50S ribosomal subunit.

Functionally, one of two assembly initiator proteins, it binds directly to the 5'-end of the 23S rRNA, where it nucleates assembly of the 50S subunit. One of the proteins that surrounds the polypeptide exit tunnel on the outside of the subunit. In Chlamydia pneumoniae (Chlamydophila pneumoniae), this protein is Large ribosomal subunit protein uL24.